Reading from the N-terminus, the 863-residue chain is DNA gyrase subunit A (863 aa).

The 464-residue stretch at 37–500 (LPDARDGLKP…DYDDIDIEDL (464 aa)) folds into the Topo IIA-type catalytic domain. Y125 acts as the O-(5'-phospho-DNA)-tyrosine intermediate in catalysis. Residues 527–533 (QKRGGKG) carry the GyrA-box motif.

This sequence belongs to the type II topoisomerase GyrA/ParC subunit family. Heterotetramer, composed of two GyrA and two GyrB chains. In the heterotetramer, GyrA contains the active site tyrosine that forms a transient covalent intermediate with DNA, while GyrB binds cofactors and catalyzes ATP hydrolysis.

It is found in the cytoplasm. The enzyme catalyses ATP-dependent breakage, passage and rejoining of double-stranded DNA.. A type II topoisomerase that negatively supercoils closed circular double-stranded (ds) DNA in an ATP-dependent manner to modulate DNA topology and maintain chromosomes in an underwound state. Negative supercoiling favors strand separation, and DNA replication, transcription, recombination and repair, all of which involve strand separation. Also able to catalyze the interconversion of other topological isomers of dsDNA rings, including catenanes and knotted rings. Type II topoisomerases break and join 2 DNA strands simultaneously in an ATP-dependent manner. The sequence is that of DNA gyrase subunit A from Campylobacter jejuni subsp. jejuni serotype O:2 (strain ATCC 700819 / NCTC 11168).